Consider the following 607-residue polypeptide: Elongation factor 4 (607 aa).

Positions 6-188 (DRIRNFSIIA…AIVARIPAPK (183 aa)) constitute a tr-type G domain. GTP contacts are provided by residues 18–23 (DHGKST) and 135–138 (NKID).

This sequence belongs to the TRAFAC class translation factor GTPase superfamily. Classic translation factor GTPase family. LepA subfamily.

The protein localises to the cell inner membrane. It carries out the reaction GTP + H2O = GDP + phosphate + H(+). Required for accurate and efficient protein synthesis under certain stress conditions. May act as a fidelity factor of the translation reaction, by catalyzing a one-codon backward translocation of tRNAs on improperly translocated ribosomes. Back-translocation proceeds from a post-translocation (POST) complex to a pre-translocation (PRE) complex, thus giving elongation factor G a second chance to translocate the tRNAs correctly. Binds to ribosomes in a GTP-dependent manner. In Rhizorhabdus wittichii (strain DSM 6014 / CCUG 31198 / JCM 15750 / NBRC 105917 / EY 4224 / RW1) (Sphingomonas wittichii), this protein is Elongation factor 4.